The chain runs to 552 residues: Arginine--tRNA ligase (552 aa).

Residues 130 to 140 carry the 'HIGH' region motif; sequence ANPTGPIHLGG.

This sequence belongs to the class-I aminoacyl-tRNA synthetase family. In terms of assembly, monomer.

It is found in the cytoplasm. It carries out the reaction tRNA(Arg) + L-arginine + ATP = L-arginyl-tRNA(Arg) + AMP + diphosphate. The protein is Arginine--tRNA ligase of Nocardia farcinica (strain IFM 10152).